The primary structure comprises 486 residues: Palmitoyltransferase pfa4 (486 aa).

The Cytoplasmic segment spans residues 1–15 (MTNLQTGPTTRGLQR). Residues 16–36 (FAIPAVCGLIIFLGYYSQYLF) traverse the membrane as a helical segment. Over 37–51 (NTSADLAPGPLTCRE) the chain is Lumenal. The helical transmembrane segment at 52–72 (SLIFNILLVCLWLTYYQACTV) threads the bilayer. Residues 73–146 (DPGQYKFPPK…NCVSLQTFPH (74 aa)) lie on the Cytoplasmic side of the membrane. Basic and acidic residues predominate over residues 81–91 (PKEKEDGDNNN). The interval 81–101 (PKEKEDGDNNNKRGGRGPQKA) is disordered. Residues 102–152 (KWCKKCDAPKPPRAHHCRHCARCIPRMDHHCPWTGNCVSLQTFPHFLRFLV) form the DHHC domain. Cysteine 132 serves as the catalytic S-palmitoyl cysteine intermediate. Residues 147–166 (FLRFLVYTNAALVYFARLLW) form a helical membrane-spanning segment. At 167–178 (TRLYYGLWDQRH) the chain is on the lumenal side. Residues 179–201 (VPAYLGPSVGALLGCTMLSIAWF) form a helical membrane-spanning segment. Topologically, residues 202 to 486 (ATQFALMVLL…RKVKSNGVHE (285 aa)) are cytoplasmic. Residues 314 to 420 (NDRVGMWPPP…QDGRAWMNSE (107 aa)) form a disordered region. 2 stretches are compositionally biased toward basic and acidic residues: residues 324–333 (DPEKLRRERA) and 346–376 (LNTE…DLRR). Residues 386 to 399 (EEDEIMAELEEDEG) show a composition bias toward acidic residues.

Belongs to the DHHC palmitoyltransferase family. PFA4 subfamily.

It is found in the endoplasmic reticulum membrane. It catalyses the reaction L-cysteinyl-[protein] + hexadecanoyl-CoA = S-hexadecanoyl-L-cysteinyl-[protein] + CoA. Mediates the reversible addition of palmitate to target proteins, thereby regulating their membrane association and biological function. The polypeptide is Palmitoyltransferase pfa4 (Neurospora crassa (strain ATCC 24698 / 74-OR23-1A / CBS 708.71 / DSM 1257 / FGSC 987)).